The sequence spans 303 residues: Thioesterase poxG (303 aa).

The protein belongs to the lcsJ thioesterase family.

It functions in the pathway secondary metabolite biosynthesis. Functionally, thioesterase; part of the gene cluster that mediates the biosynthesis of oxaleimides, cytotoxic compounds containing an unusual disubstituted succinimide moiety. The first step of the pathway is provided by the HR-PKS poxF that serves in a new mode of collaborative biosynthesis with the PKS-NRPS poxE, by providing the olefin containing amino acid substrate via the synthesis of an ACP-bound dec-4-enoate. The cytochrome P450 monooxygenase poxM-catalyzed oxidation at the alpha-position creates the enzyme-bound 2-hydroxydec-4-enoyl-ACP thioester, which may be prone to spontaneous hydrolysis to yield 2-hydroxydec-4-enoic acid due to increased electrophilicity of the carbonyl. 2-hydroxydec-4-enoic acid can then be further oxidized by poxM to yield the alpha-ketoacid 2-oxodec-4-enoicacid, which is reductively aminated by the aminotransferase poxL to yield (S,E)-2-aminodec-4-enoic acid. The Hybrid PKS-NRPS synthetase poxE then performs condensation between the octaketide product of its PKS modules and the amino group of (S,E)-2-aminodec-4-enoic acid which is activated and incorporated by the adenylation domain. The resulting aminoacyl product can be cyclized by the Diels-Alderase PoxQ and reductively released by the reductive (R) domain of poxE to yield an aldehyde intermediate. The released aldehyde is then substrate for a Knoevenagel condensation by the hydrolyase poxO followed by an oxidation at the 5-position of the pyrrolidone ring. The presence of the olefin from the amino acid building block allows for migration of the substituted allyl group to occur. This allylic transposition reaction takes place in a conjugate addition, semipinacol-like fashion to yield a succinimide intermediate. Iterative two-electron oxidations of the C7 methyl of the succinimide intermediate to the carboxylic acid can be catalyzed by one of two remaining cytochrome P450 monooxygenasess poxC or poxD to yield oxaleimide A. Subsequent oxidation yields the maleimide scaffold oxaleimide I. Both oxaleimide A and oxaleimide I can undergo oxidative modifications in the decalin ring to yield the series of products oxaleimides B to H. The polypeptide is Thioesterase poxG (Penicillium oxalicum (strain 114-2 / CGMCC 5302) (Penicillium decumbens)).